Consider the following 124-residue polypeptide: Small ribosomal subunit protein uS12 (124 aa).

The segment at 1-32 (MPTIQQLVRKGREDKVVKTKTPALKGSPQRRG) is disordered. At Asp89 the chain carries 3-methylthioaspartic acid. Residues 105-124 (QGVKNRKQARSRYGAKKEKS) form a disordered region. A compositionally biased stretch (basic residues) spans 108–118 (KNRKQARSRYG).

Belongs to the universal ribosomal protein uS12 family. In terms of assembly, part of the 30S ribosomal subunit. Contacts proteins S8 and S17. May interact with IF1 in the 30S initiation complex.

Functionally, with S4 and S5 plays an important role in translational accuracy. In terms of biological role, interacts with and stabilizes bases of the 16S rRNA that are involved in tRNA selection in the A site and with the mRNA backbone. Located at the interface of the 30S and 50S subunits, it traverses the body of the 30S subunit contacting proteins on the other side and probably holding the rRNA structure together. The combined cluster of proteins S8, S12 and S17 appears to hold together the shoulder and platform of the 30S subunit. The chain is Small ribosomal subunit protein uS12 from Kineococcus radiotolerans (strain ATCC BAA-149 / DSM 14245 / SRS30216).